Here is a 466-residue protein sequence, read N- to C-terminus: Glutamate--tRNA ligase 2 (466 aa).

The 'HIGH' region motif lies at 11 to 21 (PSPTGFLHIGG). Residues 239–243 (KLSKR) carry the 'KMSKS' region motif. Lys242 lines the ATP pocket.

It belongs to the class-I aminoacyl-tRNA synthetase family. Glutamate--tRNA ligase type 1 subfamily. In terms of assembly, monomer.

The protein resides in the cytoplasm. It carries out the reaction tRNA(Glu) + L-glutamate + ATP = L-glutamyl-tRNA(Glu) + AMP + diphosphate. Functionally, catalyzes the attachment of glutamate to tRNA(Glu) in a two-step reaction: glutamate is first activated by ATP to form Glu-AMP and then transferred to the acceptor end of tRNA(Glu). This Roseobacter denitrificans (strain ATCC 33942 / OCh 114) (Erythrobacter sp. (strain OCh 114)) protein is Glutamate--tRNA ligase 2.